We begin with the raw amino-acid sequence, 281 residues long: Probable endonuclease 4 (281 aa).

Positions 69, 109, 145, 179, 182, 216, 229, 231, and 261 each coordinate Zn(2+).

Belongs to the AP endonuclease 2 family. The cofactor is Zn(2+).

It carries out the reaction Endonucleolytic cleavage to 5'-phosphooligonucleotide end-products.. In terms of biological role, endonuclease IV plays a role in DNA repair. It cleaves phosphodiester bonds at apurinic or apyrimidinic (AP) sites, generating a 3'-hydroxyl group and a 5'-terminal sugar phosphate. The sequence is that of Probable endonuclease 4 from Proteus mirabilis (strain HI4320).